A 1061-amino-acid chain; its full sequence is MDFTEIHKRSRRKKFQQIHQDRKDEMIQQLGRRFHNQPSTSATYPSAVEDIPLPSEVPNVFGAPPPLTNADFHRNFLVDPDVVVSHSASLIRSNRHIVKAEDAEQYMMVSRERVGTTAERVLEDFNSRVIKPLKAKRRLQIDVPYIDHPLHSMRSKTPERKENEEDSDSEIRSSDSSSDAEYGSDVEEEPDSCRRKKRTHKIQKADSSQTKVEEKERQNTLLRMGIERKRNHPNAIDPHISYNEKGLGNDSPECRCPFPIRNRGLKHGYYAGENQVLKCSKNDRANLHYYTLHVTPAPNESQIQKTQMLINGMEYHFEGFTMVTHAPLPDCMTRRPVFKYSIDYEFQLIEEFMPTECFDPEDCNSIFEYIFHDIFELLDFDLYPKHLPPGTASCPTIHIVPRFVAMENNTTFIWSSKTVLAFFLLHGKNNMFSPEDVEKNCAMSDDAFGRTIAKLKQSIVLNPMKKPSALRADWFSRDLENKEMFLIQNTIRSQNFASPFLPQIAALEKKMSRLKQEKKDSGNKNPHYENLKAELIVLKDKHREARQLKLKLPVKDYIDTGLKPDVVAHVAMAIIASHHIRYNFSLSVFEKVIEYKFNDRRIVELALIHSSFRSYYGTTPDHVKNMISNCGYRKKYGAEERREKKKGIISLFNIMGGETSGGEPILHNERLEYLGDAVVELIASHHLFFILNHHFEGGLATYRTALVQNRNLAKLAMNCRIDEMLQFAHGADLINEAEWKHALANAFEALMAGVFLDSGIAPCDAIFSKAMYGKDPEMKKVWDHLNEHELKIEDPLGDRDLSRITPALTDFHRLEQIIGIEFNNIRLLAKAFTRRNVPFNDLTKGHNQRLEWLGDSVLQLIISDYLYRNFPLHHEGHMSLLRTSLVSNQTQSVVCDDLGFQEFVIKAPHRKNDLKMKDKADLVEAFIGALYVDKGLEYCRSFIRTVFCPRLKHFINSEKWNDAKSHLQQWCLAIRDSRNPNPAMPEYRLLGIQGPTNNRIFRVAVYFRGERLSSAAASNMHTAELKAAENALAALEKASFSRMREKYMSGRQHRLHRIFFS.

Disordered stretches follow at residues 1 to 20 and 149 to 244; these read MDFTEIHKRSRRKKFQQIHQ and PLHS…SYNE. Positions 156-173 are enriched in basic and acidic residues; the sequence is KTPERKENEEDSDSEIRS. RNase III domains are found at residues 586–759 and 811–935; these read LSVF…LDSG and FHRL…VDKG. 3 residues coordinate Mg(2+): E851, D921, and E924. One can recognise a DRBM domain in the interval 962–1037; sequence DAKSHLQQWC…AENALAALEK (76 aa).

This sequence belongs to the ribonuclease III family. Mg(2+) serves as cofactor. The cofactor is Mn(2+).

The protein localises to the nucleus. It catalyses the reaction Endonucleolytic cleavage to 5'-phosphomonoester.. Its function is as follows. Executes the initial step of microRNA (miRNA) processing in the nucleus, that is the cleavage of pri-miRNA to release pre-miRNA. Involved in pre-rRNA processing. Cleaves double-strand RNA and does not cleave single-strand RNA. Involved in fertility. Required for the function or synthesis of the let-7 miRNA. This is Ribonuclease 3 from Caenorhabditis briggsae.